An 80-amino-acid polypeptide reads, in one-letter code: Sulfur carrier protein TusA (80 aa).

Cys-17 functions as the Cysteine persulfide intermediate in the catalytic mechanism.

The protein belongs to the sulfur carrier protein TusA family.

It localises to the cytoplasm. In terms of biological role, sulfur carrier protein which probably makes part of a sulfur-relay system. In Pseudomonas putida (strain GB-1), this protein is Sulfur carrier protein TusA.